The primary structure comprises 338 residues: Malate dehydrogenase, mitochondrial (338 aa).

The N-terminal 24 residues, 1–24 (MLSALARPAGAALRRSFSTSAQNN), are a transit peptide targeting the mitochondrion. Residues 31–37 (GASGGIG) and aspartate 57 each bind NAD(+). An O-linked (GalNAc...) serine glycan is attached at serine 33. Lysine 78 and lysine 91 each carry N6-acetyllysine; alternate. 2 positions are modified to N6-succinyllysine; alternate: lysine 78 and lysine 91. Substrate-binding residues include arginine 104 and arginine 110. Residues asparagine 117 and 140–142 (ISN) each bind NAD(+). Asparagine 142 serves as a coordination point for substrate. Lysine 165 bears the N6-acetyllysine mark. Aspartate 173 (proton relay) is an active-site residue. Arginine 176 is a substrate binding site. Position 185 is an N6-acetyllysine; alternate (lysine 185). Lysine 185 bears the N6-succinyllysine; alternate mark. Catalysis depends on histidine 200, which acts as the Proton acceptor. Lysine 203 is subject to N6-succinyllysine. 2 positions are modified to N6-acetyllysine; alternate: lysine 215 and lysine 239. 2 positions are modified to N6-succinyllysine; alternate: lysine 215 and lysine 239. Position 239 is an N6-malonyllysine; alternate (lysine 239). Serine 246 is subject to Phosphoserine. NAD(+) is bound at residue methionine 251. N6-succinyllysine is present on lysine 269. 5 positions are modified to N6-acetyllysine; alternate: lysine 296, lysine 301, lysine 307, lysine 314, and lysine 324. N6-succinyllysine; alternate is present on residues lysine 296, lysine 301, lysine 307, lysine 314, and lysine 324. Lysine 307 carries the N6-malonyllysine; alternate modification. Phosphoserine is present on serine 326. Residues lysine 328, lysine 329, and lysine 335 each carry the N6-acetyllysine; alternate modification. An N6-succinyllysine; alternate modification is found at lysine 328. Lysine 329 bears the N6-malonyllysine; alternate mark. Lysine 335 bears the N6-succinyllysine; alternate mark.

It belongs to the LDH/MDH superfamily. MDH type 1 family. In terms of assembly, homodimer. Acetylation is enhanced after treatment either with trichostin A (TSA) or with nicotinamide (NAM) with the appearance of tri- and tetraacetylations. Glucose also increases acetylation. Ubiquitously expressed. Highly expressed in skeletal muscle and heart. Also expressed in liver, ileum, colon, kidney and adipose tissue, and at very low levels in lung, pancreas, stomach and spleen.

It localises to the mitochondrion matrix. The enzyme catalyses (S)-malate + NAD(+) = oxaloacetate + NADH + H(+). With respect to regulation, enzyme activity is enhanced by acetylation. The chain is Malate dehydrogenase, mitochondrial from Felis catus (Cat).